We begin with the raw amino-acid sequence, 72 residues long: UPF0352 protein Shal_2512 (72 aa).

The protein belongs to the UPF0352 family.

This Shewanella halifaxensis (strain HAW-EB4) protein is UPF0352 protein Shal_2512.